Here is a 216-residue protein sequence, read N- to C-terminus: Transmembrane protein 163a (216 aa).

Residues Met-1 to Ala-15 lie on the Cytoplasmic side of the membrane. Residues Leu-16–Val-36 form a helical membrane-spanning segment. The Extracellular segment spans residues Ser-37–Ala-43. The chain crosses the membrane as a helical span at residues Ser-44–Trp-64. At Arg-65–Arg-77 the chain is on the cytoplasmic side. The chain crosses the membrane as a helical span at residues Glu-78–Gly-98. Topologically, residues Lys-99–Asp-114 are extracellular. A helical membrane pass occupies residues Phe-115–Phe-135. Residues Met-136–Arg-144 are Cytoplasmic-facing. A helical membrane pass occupies residues Ala-145–Ile-165. At Ser-166–Thr-182 the chain is on the extracellular side. A helical membrane pass occupies residues Ile-183–Ile-203. Topologically, residues Pro-204–Glu-216 are cytoplasmic.

Belongs to the TMEM163 family.

The protein resides in the cytoplasmic vesicle. Its subcellular location is the secretory vesicle. It localises to the synaptic vesicle membrane. It is found in the early endosome membrane. The protein localises to the late endosome membrane. The protein resides in the lysosome membrane. Its subcellular location is the cell membrane. It carries out the reaction Zn(2+)(in) = Zn(2+)(out). Functionally, zinc ion transporter that mediates zinc efflux and plays a crucial role in intracellular zinc homeostasis. Binds the divalent cations Zn(2+), Ni(2+), and to a minor extent Cu(2+). Is a functional modulator of P2X purinoceptors, including P2RX1, P2RX3, P2RX4 and P2RX7. Plays a role in central nervous system development and is required for myelination, and survival and proliferation of oligodendrocytes. In Danio rerio (Zebrafish), this protein is Transmembrane protein 163a.